We begin with the raw amino-acid sequence, 270 residues long: 4-hydroxy-tetrahydrodipicolinate reductase (270 aa).

Residues 8–13 (GALGRM), Asp34, 102–104 (GTT), and 128–131 (SQNY) contribute to the NAD(+) site. Catalysis depends on His160, which acts as the Proton donor/acceptor. His161 is a (S)-2,3,4,5-tetrahydrodipicolinate binding site. The Proton donor role is filled by Lys164. 170–171 (GT) is a binding site for (S)-2,3,4,5-tetrahydrodipicolinate.

The protein belongs to the DapB family.

It is found in the cytoplasm. It carries out the reaction (S)-2,3,4,5-tetrahydrodipicolinate + NAD(+) + H2O = (2S,4S)-4-hydroxy-2,3,4,5-tetrahydrodipicolinate + NADH + H(+). It catalyses the reaction (S)-2,3,4,5-tetrahydrodipicolinate + NADP(+) + H2O = (2S,4S)-4-hydroxy-2,3,4,5-tetrahydrodipicolinate + NADPH + H(+). It participates in amino-acid biosynthesis; L-lysine biosynthesis via DAP pathway; (S)-tetrahydrodipicolinate from L-aspartate: step 4/4. Functionally, catalyzes the conversion of 4-hydroxy-tetrahydrodipicolinate (HTPA) to tetrahydrodipicolinate. The sequence is that of 4-hydroxy-tetrahydrodipicolinate reductase from Methanococcus maripaludis (strain C5 / ATCC BAA-1333).